The chain runs to 87 residues: Translation initiation factor IF-1 2 (87 aa).

An S1-like domain is found at 1-72 (MAKEELLELD…TKGRINFRHK (72 aa)). The segment at 68–87 (NFRHKDANSPRPPRSGQPRR) is disordered. The span at 77-87 (PRPPRSGQPRR) shows a compositional bias: pro residues.

The protein belongs to the IF-1 family. Component of the 30S ribosomal translation pre-initiation complex which assembles on the 30S ribosome in the order IF-2 and IF-3, IF-1 and N-formylmethionyl-tRNA(fMet); mRNA recruitment can occur at any time during PIC assembly.

The protein localises to the cytoplasm. Functionally, one of the essential components for the initiation of protein synthesis. Stabilizes the binding of IF-2 and IF-3 on the 30S subunit to which N-formylmethionyl-tRNA(fMet) subsequently binds. Helps modulate mRNA selection, yielding the 30S pre-initiation complex (PIC). Upon addition of the 50S ribosomal subunit IF-1, IF-2 and IF-3 are released leaving the mature 70S translation initiation complex. The sequence is that of Translation initiation factor IF-1 2 from Burkholderia cenocepacia (strain HI2424).